The sequence spans 399 residues: uncharacterized protein (399 aa).

Residues 1 to 8 (MHNLQVRR) lie on the Cytoplasmic side of the membrane. A helical membrane pass occupies residues 9–35 (HYAALKGFYLFAFLGTGSIIPLLSMYL). Residues 36–42 (TKEQHLS) lie on the Extracellular side of the membrane. The chain crosses the membrane as a helical span at residues 43-71 (GSQVGLIMSLGPIVMIFFQPFWGMLSDYT). Residues 72–75 (QKTK) lie on the Cytoplasmic side of the membrane. A helical membrane pass occupies residues 76-101 (GLLAVCTSITGIIGLAYIAFDSFPLF). At 102–105 (ILIA) the chain is on the extracellular side. Residues 106 to 123 (ACFAAFQSTIIPLSDSIS) form a helical membrane-spanning segment. Residues 124 to 134 (LRYTQETNGNY) are Cytoplasmic-facing. The chain crosses the membrane as a helical span at residues 135 to 157 (GGIRLFGSLGFGVAVFAMGQVTN). Residues 158-160 (QLY) are Extracellular-facing. Residues 161-180 (PIHVIFIFGCAFLCIAAILA) traverse the membrane as a helical segment. Over 181-210 (SQVPGQQKTTKVNIRKGFRELISNKTFLIF) the chain is Cytoplasmic. A helical transmembrane segment spans residues 211–230 (MIITFTTFAPNLANNTYFSL). The Extracellular portion of the chain corresponds to 231–234 (FLDK). The chain crosses the membrane as a helical span at residues 235–259 (SGASLSAIGILFFIGVISEIPFMRF). Residues 260–269 (AQTFIDKMGL) are Cytoplasmic-facing. Residues 270 to 289 (LNVIMLSGGVSLFRWALYFT) form a helical membrane-spanning segment. The Extracellular portion of the chain corresponds to 290-292 (APS). A helical transmembrane segment spans residues 293–315 (LWIIYATVFLQGVAIGLFIPAAL). Residues 316–327 (QYVKKITPRHVE) lie on the Cytoplasmic side of the membrane. Residues 328–355 (ATALTMYAAIGNGFGNWFCTFAGGYIFD) form a helical membrane-spanning segment. Residues 356–358 (YVS) lie on the Extracellular side of the membrane. Residues 359-379 (IFAVYLLFGILSIAGFGLTLY) form a helical membrane-spanning segment. The Cytoplasmic portion of the chain corresponds to 380 to 399 (LMKAEKNKHTLHQPAVTFKP).

The protein belongs to the major facilitator superfamily.

It is found in the cell membrane. This is an uncharacterized protein from Bacillus subtilis (strain 168).